The sequence spans 282 residues: Formamidopyrimidine-DNA glycosylase (282 aa).

Catalysis depends on P2, which acts as the Schiff-base intermediate with DNA. The Proton donor role is filled by E3. The active-site Proton donor; for beta-elimination activity is K58. DNA-binding residues include H96, R115, and K152. The segment at 238–272 adopts an FPG-type zinc-finger fold; that stretch reads HVYGRGGQPCERCGEEILKTVLGGRGTHYCPSCQN. The active-site Proton donor; for delta-elimination activity is R262.

Belongs to the FPG family. In terms of assembly, monomer. Requires Zn(2+) as cofactor.

The enzyme catalyses Hydrolysis of DNA containing ring-opened 7-methylguanine residues, releasing 2,6-diamino-4-hydroxy-5-(N-methyl)formamidopyrimidine.. The catalysed reaction is 2'-deoxyribonucleotide-(2'-deoxyribose 5'-phosphate)-2'-deoxyribonucleotide-DNA = a 3'-end 2'-deoxyribonucleotide-(2,3-dehydro-2,3-deoxyribose 5'-phosphate)-DNA + a 5'-end 5'-phospho-2'-deoxyribonucleoside-DNA + H(+). Functionally, involved in base excision repair of DNA damaged by oxidation or by mutagenic agents. Acts as a DNA glycosylase that recognizes and removes damaged bases. Has a preference for oxidized purines, such as 7,8-dihydro-8-oxoguanine (8-oxoG). Has AP (apurinic/apyrimidinic) lyase activity and introduces nicks in the DNA strand. Cleaves the DNA backbone by beta-delta elimination to generate a single-strand break at the site of the removed base with both 3'- and 5'-phosphates. This chain is Formamidopyrimidine-DNA glycosylase, found in Corynebacterium aurimucosum (strain ATCC 700975 / DSM 44827 / CIP 107346 / CN-1) (Corynebacterium nigricans).